We begin with the raw amino-acid sequence, 322 residues long: 8-oxo-(d)GTP phosphatase (322 aa).

The interval 1 to 21 (MMPVDDLQEIPLSKDTTEKSK) is disordered. Residues 22–156 (HTVRAAGAVL…DDRKVLRRFV (135 aa)) enclose the Nudix hydrolase domain. Residues 55–58 (RPRY), Asp60, and 65–67 (KGK) each bind substrate. Residues Lys65, Glu81, and Glu85 each contribute to the Mg(2+) site. A Nudix box motif is present at residues 66–87 (GKLDQGETEPVAAAREIHEETG). Substrate-binding residues include Tyr101, Lys108, Glu127, and Tyr145. Position 127 (Glu127) interacts with Mg(2+).

The protein belongs to the Nudix hydrolase family. Forms head-to-tail homodimers. Mg(2+) serves as cofactor.

The catalysed reaction is 8-oxo-dGTP + H2O = 8-oxo-dGDP + phosphate + H(+). It carries out the reaction 8-oxo-GTP + H2O = 8-oxo-GDP + phosphate + H(+). It catalyses the reaction 8-oxo-dGDP + H2O = 8-oxo-dGMP + phosphate + H(+). The enzyme catalyses 8-oxo-GDP + H2O = 8-oxo-GMP + phosphate + H(+). The catalysed reaction is P(1),P(6)-bis(5'-adenosyl) hexaphosphate + H2O = 2 ATP + 2 H(+). It carries out the reaction P(1),P(5)-bis(5'-adenosyl) pentaphosphate + H2O = ADP + ATP + 2 H(+). It catalyses the reaction P(1),P(4)-bis(5'-adenosyl) tetraphosphate + H2O = AMP + ATP + 2 H(+). Ap4A hydrolysis is inhibited by fluoride ions. Catalyzes the conversion of 8-oxo-dGTP to 8-oxo-dGDP, and 8-oxo-GTP to 8-oxo-GDP. At high enzyme concentrations, can also catalyze the conversion of 8-oxo-dGDP to 8-oxo-dGMP, and 8-oxo-GDP to 8-oxo-GMP. In addition, catalyzes the hydrolysis of the diadenosine polyphosphates diadenosine hexaphosphate (Ap6A), diadenosine pentaphosphate (Ap5A) and diadenosine tetraphosphate (Ap4A). This Mycolicibacterium smegmatis (strain ATCC 700084 / mc(2)155) (Mycobacterium smegmatis) protein is 8-oxo-(d)GTP phosphatase.